The following is a 598-amino-acid chain: DNA (cytosine-5)-methyltransferase DRM2 (598 aa).

Disordered regions lie at residues 1–49 and 114–146; these read MVDW…NGKA and EVDE…GDED. Positions 42 to 91 constitute a UBA 1 domain; sequence PQDANGKANGSGALVAEFMGMGFPKEMILKAIKEIGDTDTEQLLELLLTY. The segment covering 114-128 has biased composition (acidic residues); it reads EVDEEEDDTNWDEYD. The 45-residue stretch at 150-194 folds into the UBA 2 domain; it reads EMSEKDEKMKSLVNMGFPEDEAKMAIDRCGLDAPVAVLVDSIYAS. The segment at 227–252 is disordered; the sequence is GSKKRKRYGSGPSGNQVPFDGSHEEP. The region spanning 272–598 is the SAM-dependent MTase DRM-type domain; that stretch reads VHRNLPDQAL…EHVKATMSAV (327 aa).

The protein belongs to the class I-like SAM-binding methyltransferase superfamily. DRM-methyltransferase family. As to quaternary structure, interacts (via UBA domains) with EIF4A.

The protein resides in the nucleus. It catalyses the reaction a 2'-deoxycytidine in DNA + S-adenosyl-L-methionine = a 5-methyl-2'-deoxycytidine in DNA + S-adenosyl-L-homocysteine + H(+). Functionally, involved in de novo DNA methylation. Required for CpG and non-CpG methylation. Required for normal establishment and maintenance of RNA-directed DNA methylation (RdDM) mediated by small interfering RNAs (siRNAs). Regulates proper plant development in both vegetative and reproductive stages through DNA methylation. In Oryza sativa subsp. japonica (Rice), this protein is DNA (cytosine-5)-methyltransferase DRM2.